We begin with the raw amino-acid sequence, 488 residues long: NADH-ubiquinone oxidoreductase chain 2 (488 aa).

Transmembrane regions (helical) follow at residues 11–31 (MIKY…SISI), 38–58 (MMLL…LLTI), 74–94 (ELIT…ISMF), 106–126 (ITEE…ISME), 129–149 (NLIT…ILAL), 162–182 (LKYY…IVSI), 211–231 (IALI…HGWL), 239–259 (GMLM…IVLI), 271–291 (IEVI…VGTV), 299–319 (VIRF…LFFV), 331–351 (IYYL…IIGV), 376–396 (IGIS…FTNF), 412–434 (IYIT…NVVK), and 460–480 (IVGG…IISI).

This sequence belongs to the complex I subunit 2 family.

Its subcellular location is the mitochondrion inner membrane. It catalyses the reaction a ubiquinone + NADH + 5 H(+)(in) = a ubiquinol + NAD(+) + 4 H(+)(out). Functionally, core subunit of the mitochondrial membrane respiratory chain NADH dehydrogenase (Complex I) that is believed to belong to the minimal assembly required for catalysis. Complex I functions in the transfer of electrons from NADH to the respiratory chain. The immediate electron acceptor for the enzyme is believed to be ubiquinone. The chain is NADH-ubiquinone oxidoreductase chain 2 (nad2) from Dictyostelium discoideum (Social amoeba).